We begin with the raw amino-acid sequence, 434 residues long: GTPase Obg (434 aa).

In terms of domain architecture, Obg spans 4 to 162 (ADFIDRIVIY…RKLVLELKLL (159 aa)). Positions 163-333 (ADVGLVGYPN…IVYKLAEIVK (171 aa)) constitute an OBG-type G domain. Residues 169-176 (GYPNVGKS), 194-198 (FTTTI), 215-218 (DIPG), 285-288 (NKID), and 314-316 (SII) each bind GTP. Positions 176 and 196 each coordinate Mg(2+). The OCT domain maps to 355–434 (LWKELPERFN…VAQRAFEYKE (80 aa)).

The protein belongs to the TRAFAC class OBG-HflX-like GTPase superfamily. OBG GTPase family. Monomer. Mg(2+) serves as cofactor.

Its subcellular location is the cytoplasm. An essential GTPase which binds GTP, GDP and possibly (p)ppGpp with moderate affinity, with high nucleotide exchange rates and a fairly low GTP hydrolysis rate. Plays a role in control of the cell cycle, stress response, ribosome biogenesis and in those bacteria that undergo differentiation, in morphogenesis control. This is GTPase Obg from Thermosipho africanus (strain TCF52B).